A 1088-amino-acid polypeptide reads, in one-letter code: MKLVYTDIRNPLTQYLTEQTATFAEQGKRVFYIAPNSLSFEMERKVLEYLPEQATFDIIVTRFGQLARYLMIDRKEAGQPLDDVGLAMIFFRVLSQFEDGDLKVYGRLQTDFGFINQLVALYKELQRANMSILDLEAMDSPDKQADLVKIFLAVTDILSKEGFEHQSKLAQLTGLVETGQLDEQLKNIVLVVDGFSRFSAEEEALVSALNERVSEILIGVYASKKAVQATYAEGNVYQANVDFLRQLSAQFQTKATYIGQEPVLDSIGKFSKNMEAYYDYSGTMIDLTPADQEKIQLWEVVNQKEEVEQVATAIRQHVHQGARYKDILLLLGDVDSYKLQIGKIFDKYDIPYYFGKAEEMSHHPLVHFVESLERLRRYRFRAEDLLNLLKSGLYASISQKELDLFESYILFADMKGQAAFSRAFSVNGRADYDAEVIKEKRLVYDLTVLEPLRAKIMEPLNQLFKAGPQSGTALLEKFMAFLEAIDLPKNMEKMSRNLSEVEQEKEEQVWKSFTHLLENFHQIFGKEKLKMDDFLAILQAGMQASHYRTVPATVDVVNVKSYDLIEPHTAKYVYAIGMGQSNFPKVAKNTSLLTEEEMEKVNLVSASSSRFDLVSRENIKKNHAAMMSLLNSATEQLVISTPQIYNEGEDSLSPYIKILQKMGLKSEERGRIKTLSPQDIGHYKSLLSRLIESERPSLETEEWEGQRAFWTVLVRHLKKKLESQSIEIPTITGDIASKQLSDETLAALYPEDKPLNLSASSLTNFYNNQYLYFVRNVLRLREQESIHPTAFQHGLFLHRIFERVVMDQSELDFDQKVDKAILRTRDEAEFAMFYNQDADARYTEEVLDKIARSSATILRDNDLVEIDGQEKSFRQDKALVFDLQNGKSVHVNGTIDRLDTLQINQAVGVVDYKSSDQSFSVGDFYNGLKPQLVTYLAALQELDETKDKPVFGAMYLHLQDPIIKLKDTKNLEQLEGAANTSLVYKGLFLKEESLGLNHFYQTRNQLYTEDEFAVLLNHNQELYKQAAMDILAGRFAINPYTKDGRSVAGEQLKAITGFEADRHMGMARRLVKEAKRQDWMERMKGGQD.

The protein belongs to the helicase family. AddB/RexB type 2 subfamily. In terms of assembly, heterodimer of AddA and RexB. Mg(2+) serves as cofactor.

Its function is as follows. The heterodimer acts as both an ATP-dependent DNA helicase and an ATP-dependent, dual-direction single-stranded exonuclease. Recognizes the chi site generating a DNA molecule suitable for the initiation of homologous recombination. This subunit has 5' -&gt; 3' nuclease activity but not helicase activity. The sequence is that of ATP-dependent helicase/deoxyribonuclease subunit B from Streptococcus suis (strain 98HAH33).